The following is a 71-amino-acid chain: Protein translocase subunit SecE (71 aa).

Residues 43 to 63 (VAGAGILAVGAIGFIIYVLLT) form a helical membrane-spanning segment.

It belongs to the SecE/SEC61-gamma family. In terms of assembly, component of the Sec protein translocase complex. Heterotrimer consisting of SecY (alpha), SecG (beta) and SecE (gamma) subunits. The heterotrimers can form oligomers, although 1 heterotrimer is thought to be able to translocate proteins. Interacts with the ribosome. May interact with SecDF, and other proteins may be involved.

It localises to the cell membrane. Functionally, essential subunit of the Sec protein translocation channel SecYEG. Clamps together the 2 halves of SecY. May contact the channel plug during translocation. The polypeptide is Protein translocase subunit SecE (Methanosarcina acetivorans (strain ATCC 35395 / DSM 2834 / JCM 12185 / C2A)).